The chain runs to 145 residues: D-aminoacyl-tRNA deacylase (145 aa).

A Gly-cisPro motif, important for rejection of L-amino acids motif is present at residues 137–138 (GP).

Belongs to the DTD family. As to quaternary structure, homodimer.

It localises to the cytoplasm. It catalyses the reaction glycyl-tRNA(Ala) + H2O = tRNA(Ala) + glycine + H(+). The catalysed reaction is a D-aminoacyl-tRNA + H2O = a tRNA + a D-alpha-amino acid + H(+). Its function is as follows. An aminoacyl-tRNA editing enzyme that deacylates mischarged D-aminoacyl-tRNAs. Also deacylates mischarged glycyl-tRNA(Ala), protecting cells against glycine mischarging by AlaRS. Acts via tRNA-based rather than protein-based catalysis; rejects L-amino acids rather than detecting D-amino acids in the active site. By recycling D-aminoacyl-tRNA to D-amino acids and free tRNA molecules, this enzyme counteracts the toxicity associated with the formation of D-aminoacyl-tRNA entities in vivo and helps enforce protein L-homochirality. This chain is D-aminoacyl-tRNA deacylase, found in Limosilactobacillus reuteri (strain DSM 20016) (Lactobacillus reuteri).